Consider the following 865-residue polypeptide: Leucine--tRNA ligase (865 aa).

A 'HIGH' region motif is present at residues 58–68 (PYPSGNLHMGH). Positions 629–633 (KMSKS) match the 'KMSKS' region motif. Residue K632 coordinates ATP.

It belongs to the class-I aminoacyl-tRNA synthetase family.

Its subcellular location is the cytoplasm. The catalysed reaction is tRNA(Leu) + L-leucine + ATP = L-leucyl-tRNA(Leu) + AMP + diphosphate. The sequence is that of Leucine--tRNA ligase from Synechococcus sp. (strain ATCC 27144 / PCC 6301 / SAUG 1402/1) (Anacystis nidulans).